A 208-amino-acid chain; its full sequence is Outer-membrane lipoprotein carrier protein (208 aa).

The first 22 residues, M1–A22, serve as a signal peptide directing secretion.

It belongs to the LolA family. Monomer.

The protein resides in the periplasm. Participates in the translocation of lipoproteins from the inner membrane to the outer membrane. Only forms a complex with a lipoprotein if the residue after the N-terminal Cys is not an aspartate (The Asp acts as a targeting signal to indicate that the lipoprotein should stay in the inner membrane). The protein is Outer-membrane lipoprotein carrier protein of Shewanella loihica (strain ATCC BAA-1088 / PV-4).